The primary structure comprises 646 residues: Long-chain fatty acid transport protein 1 (646 aa).

Over 1–13 (MRAPGAGAASVVS) the chain is Extracellular. Residues 14–34 (LALLWLLGLPWTWSAAAALGV) form a helical membrane-spanning segment. Residues 35–646 (YVGSGGWRFL…TRICSGAFAL (612 aa)) lie on the Cytoplasmic side of the membrane. Residues 191 to 475 (EVSGHLGKSL…YVSESATSKK (285 aa)) are sufficient for oligomerization. AMP is bound at residue 246–257 (YIYTSGTTGLPK).

This sequence belongs to the ATP-dependent AMP-binding enzyme family. As to quaternary structure, self-associates. May function as a homodimer. Interacts with EPRS1; mediates the translocation of SLC27A1 from the cytoplasm to the plasma membrane thereby increasing the uptake of long-chain fatty acids. Interacts with DGAT2 and this interaction is enhanced in the presence of ZFYVE1. In terms of tissue distribution, highest levels of expression are detected in muscle and adipose tissue small, intermediate levels in small intestine, and barely detectable in liver. Expressed in brain gray matter.

The protein localises to the cell membrane. It is found in the endomembrane system. It localises to the cytoplasm. It catalyses the reaction a fatty acid(in) = a fatty acid(out). The catalysed reaction is (9Z)-octadecenoate(out) = (9Z)-octadecenoate(in). It carries out the reaction hexadecanoate(out) = hexadecanoate(in). The enzyme catalyses (9Z,12Z)-octadecadienoate(out) = (9Z,12Z)-octadecadienoate(in). It catalyses the reaction (5Z,8Z,11Z,14Z)-eicosatetraenoate(out) = (5Z,8Z,11Z,14Z)-eicosatetraenoate(in). The catalysed reaction is a long-chain fatty acid + ATP + CoA = a long-chain fatty acyl-CoA + AMP + diphosphate. It carries out the reaction (5Z,8Z,11Z,14Z)-eicosatetraenoate + ATP + CoA = (5Z,8Z,11Z,14Z)-eicosatetraenoyl-CoA + AMP + diphosphate. The enzyme catalyses a very long-chain fatty acid + ATP + CoA = a very long-chain fatty acyl-CoA + AMP + diphosphate. It catalyses the reaction tetracosanoate + ATP + CoA = tetracosanoyl-CoA + AMP + diphosphate. Its activity is regulated as follows. Inhibited by Triacsin C. In terms of biological role, mediates the import of long-chain fatty acids (LCFA) into the cell by facilitating their transport at the plasma membrane. Also functions as an acyl-CoA ligase catalyzing the ATP-dependent formation of fatty acyl-CoA using LCFA and very-long-chain fatty acids (VLCFA) as substrates, which prevents fatty acid efflux from cells and might drive more fatty acid uptake. May act directly as a bona fide transporter, or alternatively, in a cytoplasmic or membrane-associated multimeric protein complex to trap and draw fatty acids towards accumulation. Plays a pivotal role in regulating available LCFA substrates from exogenous sources in tissues undergoing high levels of beta-oxidation or triglyceride synthesis. May be involved in regulation of cholesterol metabolism. Probably involved in fatty acid transport across the blood barrier. The chain is Long-chain fatty acid transport protein 1 from Homo sapiens (Human).